A 270-amino-acid polypeptide reads, in one-letter code: Checkpoint signal transducer rad24 (270 aa).

Residues serine 34 and serine 66 each carry the phosphoserine modification. Positions 242–270 (AAAGGNTEGAQENAPSNAPEGEAEPKADA) are disordered.

Belongs to the 14-3-3 family. In terms of assembly, homodimer. Binds preferentially to mei2 phosphorylated by ran1/pat1. Binds preferentially to cdc25 phosphorylated by srk1 during G2; the interaction is increased during osmotic stress. Interacts with byr2. Interacts with rad25.

The protein resides in the cytoplasm. Functionally, acts in cell cycle and stress checkpoint signaling by sequestering signal transducers regulated by the checkpoints. Required for the DNA damage checkpoint that ensures that DNA damage is repaired before mitosis is attempted. During environmental stress, sequesters srk1-phosphorylated cdc25 in the cytoplasm to delay the G2/M transition. Sequesters byr2 in the cytoplasm to prevent its translocation to the plasma membrane. Sequesters ran1/pat1-phosphorylated mei2 from its non-coding RNA activators (including meiRNA), to prevent meiotic induction in vegetative cells and to regulate meiosis I. The sequence is that of Checkpoint signal transducer rad24 from Schizosaccharomyces pombe (strain 972 / ATCC 24843) (Fission yeast).